A 533-amino-acid chain; its full sequence is MARARRVKRASVTDIYRGCKQAGTCPPDVLNKVEQTTIADKILKYGSAAVFFGGLGIGTGRGSGGATGYVPLGEGPGVRVGGTPTIVRPGVTPELIGPADVIPIDTVTPIDPAAPSIVTITDSSAVDLLPELETIAEIHPVPTDNVDIDTPVVTGGRDSSAILEVADPSPPVRTRVSRTQYHNPSFQIITESTPLSGESALADHVIVFEGSGGQNIGGSRSAALDAAQESFEMQTWPSRYSFEIQEGTPPRSSTPVQRAVQSLSSLRRALYNRRLTEQVAVTDPLFLGRPSRLVQFQFDNPTFEEEVTQTFERDVEAFEEPPDRQFLDVVRLGRPTYSETPQGYVRVSRLGRRATIRTRSGAQVGAQVHFYRDLSTIDSEALEMQLLGEHSGDSTIVQAPMESSFIDINIDEPDSLHVGLQDSTEADDIDYNSADLLLEDNIEDFSGSHLVFGNTRRSTTTYTVPRFESPRNTGFYIQDVHGYNVAYPESRDTTEIILPQSDTPTVVINFEEAGGDYYLHPSLKTRKRKRKYL.

Residues 1-10 carry the Nuclear localization signal motif; that stretch reads MARARRVKRA. Cys-19 and Cys-25 are oxidised to a cystine. A Nuclear localization signal motif is present at residues 525–532; the sequence is TRKRKRKY.

This sequence belongs to the papillomaviridae L2 protein family. In terms of assembly, interacts with major capsid protein L1. Interacts with E2; this interaction inhibits E2 transcriptional activity but not the DNA replication function E2. Interacts with host GADD45GIP1. Interacts with host HSPA8; this interaction is required for L2 nuclear translocation. Interacts with host importins KPNB2 and KPNB3. Forms a complex with importin alpha2-beta1 heterodimers via interaction with the importin alpha2 adapter. Interacts with host DYNLT1; this interaction is essential for virus intracellular transport during entry. Interacts (via C-terminus) with host retromer subunits VPS35 and VPS29. In terms of processing, highly phosphorylated.

It localises to the virion. Its subcellular location is the host nucleus. It is found in the host early endosome. The protein localises to the host Golgi apparatus. Minor protein of the capsid that localizes along the inner surface of the virion, within the central cavities beneath the L1 pentamers. Plays a role in capsid stabilization through interaction with the major capsid protein L1. Once the virion enters the host cell, L2 escorts the genomic DNA into the nucleus by promoting escape from the endosomal compartments and traffic through the host Golgi network. Mechanistically, the C-terminus of L2 possesses a cell-penetrating peptide that protudes from the host endosome, interacts with host cytoplasmic retromer cargo and thereby mediates the capsid delivery to the host trans-Golgi network. Plays a role through its interaction with host dynein in the intracellular microtubule-dependent transport of viral capsid toward the nucleus. Mediates the viral genome import into the nucleus through binding to host importins. Once within the nucleus, L2 localizes viral genomes to host PML bodies in order to activate early gene expression for establishment of infection. Later on, promotes late gene expression by interacting with the viral E2 protein and by inhibiting its transcriptional activation functions. During virion assembly, encapsidates the genome by direct interaction with the viral DNA. The protein is Minor capsid protein L2 of Homo sapiens (Human).